Here is a 513-residue protein sequence, read N- to C-terminus: Probable DNA ligase (513 aa).

ATP is bound at residue E213. The active-site N6-AMP-lysine intermediate is K215. The ATP site is built by R220, R235, E264, F304, R376, and K382.

Belongs to the ATP-dependent DNA ligase family. The cofactor is Mg(2+).

It catalyses the reaction ATP + (deoxyribonucleotide)n-3'-hydroxyl + 5'-phospho-(deoxyribonucleotide)m = (deoxyribonucleotide)n+m + AMP + diphosphate.. DNA ligase that seals nicks in double-stranded DNA during DNA replication, DNA recombination and DNA repair. The polypeptide is Probable DNA ligase (Anaeromyxobacter dehalogenans (strain 2CP-C)).